A 293-amino-acid chain; its full sequence is uncharacterized protein (293 aa).

Belongs to the TolB family.

This is an uncharacterized protein from Agrobacterium fabrum (strain C58 / ATCC 33970) (Agrobacterium tumefaciens (strain C58)).